A 166-amino-acid polypeptide reads, in one-letter code: Photosystem I assembly protein Ycf3 (166 aa).

3 TPR repeats span residues Ala31 to Pro64, Ser68 to Leu101, and Gly116 to Asn149.

This sequence belongs to the Ycf3 family.

It localises to the cellular thylakoid membrane. Functionally, essential for the assembly of the photosystem I (PSI) complex. May act as a chaperone-like factor to guide the assembly of the PSI subunits. This is Photosystem I assembly protein Ycf3 from Acaryochloris marina (strain MBIC 11017).